The following is a 498-amino-acid chain: ATP synthase subunit beta, chloroplastic (498 aa).

Residue 172–179 (GGAGVGKT) coordinates ATP.

This sequence belongs to the ATPase alpha/beta chains family. As to quaternary structure, F-type ATPases have 2 components, CF(1) - the catalytic core - and CF(0) - the membrane proton channel. CF(1) has five subunits: alpha(3), beta(3), gamma(1), delta(1), epsilon(1). CF(0) has four main subunits: a(1), b(1), b'(1) and c(9-12).

It is found in the plastid. Its subcellular location is the chloroplast thylakoid membrane. It catalyses the reaction ATP + H2O + 4 H(+)(in) = ADP + phosphate + 5 H(+)(out). In terms of biological role, produces ATP from ADP in the presence of a proton gradient across the membrane. The catalytic sites are hosted primarily by the beta subunits. The sequence is that of ATP synthase subunit beta, chloroplastic from Nicotiana sylvestris (Wood tobacco).